The primary structure comprises 137 residues: DNA-directed RNA polymerase subunit omega (137 aa).

Positions 78-137 (DEPEPEAVPLLSSSPAAAAVAPQAASGDDNDIQFDRMSEEDLLRGLENLAPPTETEDEGD) are disordered. The segment covering 84–103 (AVPLLSSSPAAAAVAPQAAS) has biased composition (low complexity). Positions 110-121 (QFDRMSEEDLLR) are enriched in basic and acidic residues.

This sequence belongs to the RNA polymerase subunit omega family. In terms of assembly, the RNAP catalytic core consists of 2 alpha, 1 beta, 1 beta' and 1 omega subunit. When a sigma factor is associated with the core the holoenzyme is formed, which can initiate transcription.

It catalyses the reaction RNA(n) + a ribonucleoside 5'-triphosphate = RNA(n+1) + diphosphate. Functionally, promotes RNA polymerase assembly. Latches the N- and C-terminal regions of the beta' subunit thereby facilitating its interaction with the beta and alpha subunits. This is DNA-directed RNA polymerase subunit omega from Methylobacterium sp. (strain 4-46).